The following is a 65-amino-acid chain: NSAHPCCDPVTCKPKRGEHCISGPCCENCKFLTAGTVCLPAWGDFDNDLCTGISSDCPRNPWHKS.

One can recognise a Disintegrin domain in the interval 1–65 (NSAHPCCDPV…DCPRNPWHKS (65 aa)). 4 disulfides stabilise this stretch: cysteine 6–cysteine 29, cysteine 20–cysteine 26, cysteine 25–cysteine 50, and cysteine 38–cysteine 57. Residues 42 to 44 (WGD) carry the Cell attachment site; atypical (WGD) motif.

Belongs to the disintegrin family. Dimeric disintegrin subfamily. As to quaternary structure, heterodimer with CC8A; disulfide-linked. In terms of tissue distribution, expressed by the venom gland.

Its subcellular location is the secreted. Functionally, inhibits integrins alpha-IIb/beta-3 (ITGA2B/ITGB3), alpha-V/beta-3 (ITGAV/ITGB3), and alpha-5/beta-1 (ITGA5/ITGB1). In Cerastes cerastes (Horned desert viper), this protein is Disintegrin CC8B.